A 90-amino-acid chain; its full sequence is Putative antitoxin VapB8 (90 aa).

Positions 1 to 56 are disordered; that stretch reads MEKSRCHAVAHGGGCAGSAKSHKSGGRCGQGRGAGDSHGTRGAGRRYRAASAPHPL. Over residues 26–36 the composition is skewed to gly residues; it reads GRCGQGRGAGD.

In terms of biological role, antitoxin component of a possible type II toxin-antitoxin (TA) system. The cognate toxin is VapC8. The chain is Putative antitoxin VapB8 (vapB8) from Mycobacterium tuberculosis (strain ATCC 25618 / H37Rv).